A 434-amino-acid polypeptide reads, in one-letter code: Adenylosuccinate synthetase (434 aa).

GTP contacts are provided by residues G15–K21 and G43–T45. Catalysis depends on D16, which acts as the Proton acceptor. D16 and G43 together coordinate Mg(2+). Residues D16–K19, N41–H44, T133, R147, Q228, T243, and R307 each bind IMP. The active-site Proton donor is H44. S303–R309 contributes to the substrate binding site. GTP-binding positions include R309, K335–D337, and S418–G420.

The protein belongs to the adenylosuccinate synthetase family. Homodimer. The cofactor is Mg(2+).

The protein localises to the cytoplasm. The enzyme catalyses IMP + L-aspartate + GTP = N(6)-(1,2-dicarboxyethyl)-AMP + GDP + phosphate + 2 H(+). The protein operates within purine metabolism; AMP biosynthesis via de novo pathway; AMP from IMP: step 1/2. Plays an important role in the de novo pathway of purine nucleotide biosynthesis. Catalyzes the first committed step in the biosynthesis of AMP from IMP. This Neisseria gonorrhoeae (strain NCCP11945) protein is Adenylosuccinate synthetase.